The following is a 337-amino-acid chain: Ketol-acid reductoisomerase (NADP(+)) (337 aa).

The KARI N-terminal Rossmann domain maps to 3–183; that stretch reads IELLYDADAD…GGARAGVIPT (181 aa). NADP(+) is bound by residues 26–29, Arg49, Ser52, Ser54, and 84–87; these read YGSQ and DTSQ. The active site involves His109. Residue Gly135 coordinates NADP(+). Positions 184-329 constitute a KARI C-terminal knotted domain; that stretch reads TFREETETDL…SKLRDLMSWV (146 aa). Asp192, Glu196, Glu228, and Glu232 together coordinate Mg(2+). A substrate-binding site is contributed by Ser253.

This sequence belongs to the ketol-acid reductoisomerase family. The cofactor is Mg(2+).

It catalyses the reaction (2R)-2,3-dihydroxy-3-methylbutanoate + NADP(+) = (2S)-2-acetolactate + NADPH + H(+). The enzyme catalyses (2R,3R)-2,3-dihydroxy-3-methylpentanoate + NADP(+) = (S)-2-ethyl-2-hydroxy-3-oxobutanoate + NADPH + H(+). It functions in the pathway amino-acid biosynthesis; L-isoleucine biosynthesis; L-isoleucine from 2-oxobutanoate: step 2/4. Its pathway is amino-acid biosynthesis; L-valine biosynthesis; L-valine from pyruvate: step 2/4. Functionally, involved in the biosynthesis of branched-chain amino acids (BCAA). Catalyzes an alkyl-migration followed by a ketol-acid reduction of (S)-2-acetolactate (S2AL) to yield (R)-2,3-dihydroxy-isovalerate. In the isomerase reaction, S2AL is rearranged via a Mg-dependent methyl migration to produce 3-hydroxy-3-methyl-2-ketobutyrate (HMKB). In the reductase reaction, this 2-ketoacid undergoes a metal-dependent reduction by NADPH to yield (R)-2,3-dihydroxy-isovalerate. The polypeptide is Ketol-acid reductoisomerase (NADP(+)) (Corynebacterium diphtheriae (strain ATCC 700971 / NCTC 13129 / Biotype gravis)).